The chain runs to 354 residues: NADH-ubiquinone oxidoreductase chain 2 (354 aa).

A run of 10 helical transmembrane segments spans residues 5–25 (ILMV…SSHH), 26–46 (WFTL…ILSY), 60–80 (FLVQ…QAWL), 96–116 (FLMT…YWFP), 122–142 (VGFI…FAVL), 149–169 (LNIS…GWGG), 198–218 (VSVA…VFFM), 242–262 (AGLV…GFLI), 274–294 (GCFI…FFYL), and 330–350 (VLLS…PVFI).

The protein belongs to the complex I subunit 2 family.

It is found in the mitochondrion inner membrane. The catalysed reaction is a ubiquinone + NADH + 5 H(+)(in) = a ubiquinol + NAD(+) + 4 H(+)(out). Its function is as follows. Core subunit of the mitochondrial membrane respiratory chain NADH dehydrogenase (Complex I) that is believed to belong to the minimal assembly required for catalysis. Complex I functions in the transfer of electrons from NADH to the respiratory chain. The immediate electron acceptor for the enzyme is believed to be ubiquinone. The protein is NADH-ubiquinone oxidoreductase chain 2 (ND2) of Patiria pectinifera (Starfish).